Consider the following 697-residue polypeptide: Potassium-transporting ATPase ATP-binding subunit (697 aa).

The next 4 membrane-spanning stretches (helical) occupy residues 55-75, 79-99, 245-265, and 271-291; these read PIMF…FLPS, SIPG…VLFA, LTLI…YLGF, and VLVA…LSAI. Asp324 serves as the catalytic 4-aspartylphosphate intermediate. Residues Asp361, Glu365, 393–400, and Lys412 contribute to the ATP site; that span reads FKAETRMS. Residues Asp535 and Asp539 each coordinate Mg(2+). Transmembrane regions (helical) follow at residues 605–625, 633–653, and 677–697; these read FAII…LNIM, AILS…PLAM, and GGVI…GLFI.

The protein belongs to the cation transport ATPase (P-type) (TC 3.A.3) family. Type IA subfamily. As to quaternary structure, the system is composed of three essential subunits: KdpA, KdpB and KdpC.

The protein localises to the cell membrane. The enzyme catalyses K(+)(out) + ATP + H2O = K(+)(in) + ADP + phosphate + H(+). Its function is as follows. Part of the high-affinity ATP-driven potassium transport (or Kdp) system, which catalyzes the hydrolysis of ATP coupled with the electrogenic transport of potassium into the cytoplasm. This subunit is responsible for energy coupling to the transport system and for the release of the potassium ions to the cytoplasm. The protein is Potassium-transporting ATPase ATP-binding subunit of Bacillus anthracis (strain CDC 684 / NRRL 3495).